The chain runs to 240 residues: 7-cyano-7-deazaguanine synthase (240 aa).

Position 18–28 (18–28 (FSGGQDSTTCL)) interacts with ATP. Residues cysteine 197, cysteine 206, cysteine 209, and cysteine 212 each coordinate Zn(2+).

This sequence belongs to the QueC family. The cofactor is Zn(2+).

The enzyme catalyses 7-carboxy-7-deazaguanine + NH4(+) + ATP = 7-cyano-7-deazaguanine + ADP + phosphate + H2O + H(+). The protein operates within purine metabolism; 7-cyano-7-deazaguanine biosynthesis. Catalyzes the ATP-dependent conversion of 7-carboxy-7-deazaguanine (CDG) to 7-cyano-7-deazaguanine (preQ(0)). This chain is 7-cyano-7-deazaguanine synthase, found in Shewanella putrefaciens (strain CN-32 / ATCC BAA-453).